Reading from the N-terminus, the 158-residue chain is MVVRTGTCSFCEYRIYPGRGQRFIAKDGRGFFFLTKKAKCLSLRKVKAQKITWTIARRRLWKKVKATDIAQKKKKRNVTVARAIVGISLEEINRRKNLDASHKKAEAEKAVRELKQKKANDIEKKRADRKLQGKDVKAAKKAETKKTKQPVGAKGGKK.

Residues 98–146 (LDASHKKAEAEKAVRELKQKKANDIEKKRADRKLQGKDVKAAKKAETKK) are compositionally biased toward basic and acidic residues. Residues 98–158 (LDASHKKAEA…QPVGAKGGKK (61 aa)) form a disordered region.

Belongs to the eukaryotic ribosomal protein eL24 family.

The sequence is that of Large ribosomal subunit protein eL24 (RPL24) from Tetrahymena thermophila (strain SB210).